The primary structure comprises 250 residues: Aquaporin SIP2-1 (250 aa).

The next 2 helical transmembrane spans lie at 14-34 (PWLV…GALV) and 55-75 (VALS…TGGA). The short motif at 78-80 (NPL) is the NPA 1 element. Helical transmembrane passes span 95–115 (LYLF…ILGV), 132–152 (SVGV…VVIV), 178–200 (FHLL…AWAY), and 211–231 (LLVY…VVTL). The NPA 2 motif lies at 191-193 (NPA).

The protein belongs to the MIP/aquaporin (TC 1.A.8) family. SIP (TC 1.A.8.10) subfamily. Expressed in leaves and anthers, and at lower levels in roots.

The protein localises to the membrane. Functionally, aquaporins facilitate the transport of water and small neutral solutes across cell membranes. The chain is Aquaporin SIP2-1 (SIP2-1) from Oryza sativa subsp. japonica (Rice).